A 492-amino-acid chain; its full sequence is uncharacterized protein (492 aa).

12 consecutive transmembrane segments (helical) span residues 13–33, 42–62, 97–117, 150–170, 180–200, 222–242, 258–278, 320–340, 359–379, 391–411, 428–448, and 463–483; these read LGFI…WRFG, GAFL…LMIL, FIIT…LIIL, GILV…SAGI, IMIP…LTLP, VWLS…GILI, AVTV…AVFG, FGIV…VSIV, LLAV…GAGL, GYLL…LFGG, VWWK…VVFL, and TTYV…SVIL.

This sequence belongs to the sodium:neurotransmitter symporter (SNF) (TC 2.A.22) family.

The protein localises to the cell membrane. Putative sodium-dependent transporter. This is an uncharacterized protein from Methanocaldococcus jannaschii (strain ATCC 43067 / DSM 2661 / JAL-1 / JCM 10045 / NBRC 100440) (Methanococcus jannaschii).